Here is a 238-residue protein sequence, read N- to C-terminus: Purine nucleoside phosphorylase DeoD-type (238 aa).

Residue H4 participates in a purine D-ribonucleoside binding. Residues G20, R24, R43, and 87–90 (RVGS) each bind phosphate. Residues 179–181 (EME) and 203–204 (SD) each bind a purine D-ribonucleoside. D204 (proton donor) is an active-site residue.

This sequence belongs to the PNP/UDP phosphorylase family. Homohexamer; trimer of homodimers.

It catalyses the reaction a purine D-ribonucleoside + phosphate = a purine nucleobase + alpha-D-ribose 1-phosphate. It carries out the reaction a purine 2'-deoxy-D-ribonucleoside + phosphate = a purine nucleobase + 2-deoxy-alpha-D-ribose 1-phosphate. Catalyzes the reversible phosphorolytic breakdown of the N-glycosidic bond in the beta-(deoxy)ribonucleoside molecules, with the formation of the corresponding free purine bases and pentose-1-phosphate. The sequence is that of Purine nucleoside phosphorylase DeoD-type from Haemophilus influenzae (strain 86-028NP).